Consider the following 268-residue polypeptide: WUSCHEL-related homeobox 11 (268 aa).

Residues Met1–Ser35 form a disordered region. Low complexity predominate over residues Ser16–Ala27. A DNA-binding region (homeobox; WUS-type) is located at residues Pro29–Gln93.

It belongs to the WUS homeobox family.

The protein resides in the nucleus. Its function is as follows. Transcription factor which may be involved in developmental processes. This is WUSCHEL-related homeobox 11 (WOX11) from Arabidopsis thaliana (Mouse-ear cress).